A 95-amino-acid polypeptide reads, in one-letter code: Aspartyl/glutamyl-tRNA(Asn/Gln) amidotransferase subunit C (95 aa).

This sequence belongs to the GatC family. In terms of assembly, heterotrimer of A, B and C subunits.

It carries out the reaction L-glutamyl-tRNA(Gln) + L-glutamine + ATP + H2O = L-glutaminyl-tRNA(Gln) + L-glutamate + ADP + phosphate + H(+). The enzyme catalyses L-aspartyl-tRNA(Asn) + L-glutamine + ATP + H2O = L-asparaginyl-tRNA(Asn) + L-glutamate + ADP + phosphate + 2 H(+). In terms of biological role, allows the formation of correctly charged Asn-tRNA(Asn) or Gln-tRNA(Gln) through the transamidation of misacylated Asp-tRNA(Asn) or Glu-tRNA(Gln) in organisms which lack either or both of asparaginyl-tRNA or glutaminyl-tRNA synthetases. The reaction takes place in the presence of glutamine and ATP through an activated phospho-Asp-tRNA(Asn) or phospho-Glu-tRNA(Gln). This Clostridium botulinum (strain Loch Maree / Type A3) protein is Aspartyl/glutamyl-tRNA(Asn/Gln) amidotransferase subunit C.